The sequence spans 234 residues: Phosphoribosylaminoimidazole-succinocarboxamide synthase (234 aa).

This sequence belongs to the SAICAR synthetase family.

The catalysed reaction is 5-amino-1-(5-phospho-D-ribosyl)imidazole-4-carboxylate + L-aspartate + ATP = (2S)-2-[5-amino-1-(5-phospho-beta-D-ribosyl)imidazole-4-carboxamido]succinate + ADP + phosphate + 2 H(+). It participates in purine metabolism; IMP biosynthesis via de novo pathway; 5-amino-1-(5-phospho-D-ribosyl)imidazole-4-carboxamide from 5-amino-1-(5-phospho-D-ribosyl)imidazole-4-carboxylate: step 1/2. This Clostridium botulinum (strain Loch Maree / Type A3) protein is Phosphoribosylaminoimidazole-succinocarboxamide synthase.